A 231-amino-acid polypeptide reads, in one-letter code: Lipid A acyltransferase PagP (231 aa).

Positions 1–23 (MNKLTVRNFIVGLLIVFSLNSFS) are cleaved as a signal peptide. A compositionally biased stretch (low complexity) spans 24-43 (SPPSISNSSSNSIDENSPIN). The disordered stretch occupies residues 24–59 (SPPSISNSSSNSIDENSPINTFKISPDNQTSKKSDL). Catalysis depends on residues H100, D145, and S146.

The protein belongs to the lipid A palmitoyltransferase family. Homodimer.

It is found in the cell outer membrane. It carries out the reaction a lipid A + a 1,2-diacyl-sn-glycero-3-phosphocholine = a hepta-acyl lipid A + a 2-acyl-sn-glycero-3-phosphocholine. It catalyses the reaction a lipid IVA + a 1,2-diacyl-sn-glycero-3-phosphocholine = a lipid IVB + a 2-acyl-sn-glycero-3-phosphocholine. The enzyme catalyses a lipid IIA + a 1,2-diacyl-sn-glycero-3-phosphocholine = a lipid IIB + a 2-acyl-sn-glycero-3-phosphocholine. Functionally, transfers a fatty acid residue from the sn-1 position of a phospholipid to the N-linked hydroxyfatty acid chain on the proximal unit of lipid A or its precursors. This is Lipid A acyltransferase PagP from Legionella longbeachae serogroup 1 (strain NSW150).